We begin with the raw amino-acid sequence, 280 residues long: Putative high affinity immunoglobulin gamma Fc receptor IB (280 aa).

The signal sequence occupies residues 1-15 (MWFLTTLLLWVPVDG). At 16-198 (QVDTTKAVIT…LQLPTPVWFH (183 aa)) the chain is on the extracellular side. 2 Ig-like C2-type domains span residues 22-101 (AVIT…LEIH) and 95-184 (PIQL…ISQY). Cystine bridges form between Cys43-Cys85 and Cys124-Cys168. Residues Asn59, Asn152, and Asn163 are each glycosylated (N-linked (GlcNAc...) asparagine). Residues 199–219 (VLFYLAVGIMFLVNTVLWVTI) traverse the membrane as a helical segment. At 220–280 (RKELKRKKKW…VHRKEPQGAT (61 aa)) the chain is on the cytoplasmic side. The tract at residues 258–280 (KCQEQKEEQLQEGVHRKEPQGAT) is disordered.

Belongs to the immunoglobulin superfamily. FCGR1 family.

It is found in the cell membrane. Its function is as follows. May bind to the Fc region of immunoglobulins gamma with a low affinity compared to FCGR1A. May function in the humoral immune response. The chain is Putative high affinity immunoglobulin gamma Fc receptor IB from Homo sapiens (Human).